A 133-amino-acid chain; its full sequence is Small ribosomal subunit protein eS8 (133 aa).

The segment at 1 to 34 (MGVWHGRSLRKPTGGRIRPHRKKRKFEMGNPPTE) is disordered.

The protein belongs to the eukaryotic ribosomal protein eS8 family. Part of the 30S ribosomal subunit.

The protein is Small ribosomal subunit protein eS8 of Methanopyrus kandleri (strain AV19 / DSM 6324 / JCM 9639 / NBRC 100938).